Consider the following 423-residue polypeptide: Protein SOSEKI 5 (423 aa).

The interval 1 to 33 is disordered; it reads MSSRVFRATPDNNYLVPRRSKDQQDTSPDRNRI. Residues 19-33 show a composition bias toward basic and acidic residues; it reads RSKDQQDTSPDRNRI. The segment at 45-136 is DIX-like oligomerization domain; the sequence is RKVPVVYYLC…YVLKGSEVLD (92 aa). Disordered stretches follow at residues 150 to 172 and 196 to 258; these read SSFRDPRSLNPDKNSGDDIPAVI and SSAE…SPET. Residues 196–211 show a composition bias toward polar residues; it reads SSAESTQRLAADASTQ. 2 consecutive short sequence motifs (association to cell membranes) follow at residues 233-234 and 303-304; these read AS and CG. A disordered region spans residues 379 to 423; it reads SSSYNADRCSRMGPTTEKDEEEAVRAKCIPRKPKPVAKRNNGGQQ. A compositionally biased stretch (basic residues) spans 406–415; sequence CIPRKPKPVA.

The protein belongs to the SOSEKI family. Homodimer. Forms long polymer filaments with other SOKs proteins polymers (e.g. SOK1, SOK2, SOK3 and SOK4) crucial for polar localization and biological activity. Binds to ANGUSTIFOLIA (AN). As to expression, expressed during embryogenesis and in roots.

It localises to the cell membrane. In terms of biological role, SOSEKI proteins (SOK1-5) locally interpret global polarity cues and can influence cell division orientation to coordinate cell polarization relative to body axes. This chain is Protein SOSEKI 5, found in Arabidopsis thaliana (Mouse-ear cress).